A 280-amino-acid polypeptide reads, in one-letter code: Bis(5'-nucleosyl)-tetraphosphatase, symmetrical (280 aa).

Belongs to the Ap4A hydrolase family.

It catalyses the reaction P(1),P(4)-bis(5'-adenosyl) tetraphosphate + H2O = 2 ADP + 2 H(+). In terms of biological role, hydrolyzes diadenosine 5',5'''-P1,P4-tetraphosphate to yield ADP. In Shigella flexneri serotype 5b (strain 8401), this protein is Bis(5'-nucleosyl)-tetraphosphatase, symmetrical.